The chain runs to 467 residues: MWRCPLGLLLLLPLAGHLALGAQQGRGRRELAPGLHLRGIRDAGGRYCQEQDLCCRGRADDCALPYLGAICYCDLFCNRTVSDCCPDFWDFCLGVPPPFPPIQGCMHGGRIYPVLGTYWDNCNRCTCQENRQWQCDQEPCLVDPDMIKAINQGNYGWQAGNHSAFWGMTLDEGIRYRLGTIRPSSSVMNMHEIYTVLNPGEVLPTAFEASEKWPNLIHEPLDQGNCAGSWAFSTAAVASDRVSIHSLGHMTPVLSPQNLLSCDTHQQQGCRGGRLDGAWWFLRRRGVVSDHCYPFSGRERDEAGPAPPCMMHSRAMGRGKRQATAHCPNSYVNNNDIYQVTPVYRLGSNDKEIMKELMENGPVQALMEVHEDFFLYKGGIYSHTPVSLGRPERYRRHGTHSVKITGWGEETLPDGRTLKYWTAANSWGPAWGERGHFRIVRGVNECDIESFVLGVWGRVGMEDMGHH.

An N-terminal signal peptide occupies residues 1–21 (MWRCPLGLLLLLPLAGHLALG). The SMB domain maps to 50–98 (EQDLCCRGRADDCALPYLGAICYCDLFCNRTVSDCCPDFWDFCLGVPPP). 5 cysteine pairs are disulfide-bonded: Cys54-Cys73, Cys71-Cys73, Cys71-Cys85, Cys77-Cys84, and Cys85-Cys92. Asn78 carries N-linked (GlcNAc...) asparagine glycosylation. An N-linked (GlcNAc...) asparagine glycan is attached at Asn161.

This sequence belongs to the peptidase C1 family. Post-translationally, glycosylated. In terms of tissue distribution, highly expressed in aorta, heart, placenta, kidney and a colorectal adenocarcinoma cell line. Moderately expressed in skeletal muscle, pancreas, lung, lymph nodes, adrenal gland, bone marrow and thyroid. Weakly expressed in colon, small intestine, ovary, spleen, testis and prostate. Predominantly found in vascular smooth muscle cells, but also in cardiac and skeletal muscle cells as well as kidney.

It localises to the secreted. May be implicated in the adrenocortical zonation and in mechanisms for repressing the CYP11B1 gene expression in adrenocortical cells. This is a non catalytic peptidase C1 family protein. The polypeptide is Tubulointerstitial nephritis antigen-like (TINAGL1) (Homo sapiens (Human)).